Reading from the N-terminus, the 396-residue chain is Acetate kinase (396 aa).

Asparagine 6 contacts Mg(2+). Lysine 13 contacts ATP. Substrate is bound at residue arginine 89. Catalysis depends on aspartate 145, which acts as the Proton donor/acceptor. ATP contacts are provided by residues 205–209 (HLGNG), 280–282 (DMR), and 329–333 (GVGEN). Glutamate 383 contributes to the Mg(2+) binding site.

It belongs to the acetokinase family. Homodimer. Mg(2+) serves as cofactor. Requires Mn(2+) as cofactor.

It is found in the cytoplasm. It carries out the reaction acetate + ATP = acetyl phosphate + ADP. Its pathway is metabolic intermediate biosynthesis; acetyl-CoA biosynthesis; acetyl-CoA from acetate: step 1/2. Catalyzes the formation of acetyl phosphate from acetate and ATP. Can also catalyze the reverse reaction. This is Acetate kinase from Mesoplasma florum (strain ATCC 33453 / NBRC 100688 / NCTC 11704 / L1) (Acholeplasma florum).